The sequence spans 1249 residues: MAGE-like protein 2 (1249 aa).

Residues 1–10 (MSQLSKNLGD) are compositionally biased toward polar residues. Disordered stretches follow at residues 1–50 (MSQL…PPID), 134–233 (APGA…AQPP), 300–327 (QPPA…QPMA), 349–378 (PQVP…WQAT), 410–433 (RQGP…VRQA), 515–569 (QALP…LPAP), 647–679 (QPFQ…EVPT), 714–746 (LMTP…RAPS), 862–910 (PQAT…DWQG), and 930–957 (VSGD…ILSG). Pro residues-rich tracts occupy residues 40–49 (PPVPWDPPPI) and 140–233 (AHPP…AQPP). The segment covering 301-311 (PPASGAPMAQP) has biased composition (low complexity). 2 stretches are compositionally biased toward pro residues: residues 312-324 (AAPP…PPAQ) and 349-358 (PQVPQGPQAP). Residues 369 to 378 (QATSPGWQAT) are compositionally biased toward polar residues. The span at 410 to 432 (RQGPPPIRPGPPPIRPGPPPVRQ) shows a compositional bias: pro residues. Residues 525-552 (QAPQARLPAPQVQAAPQVPTAPPATQVP) are compositionally biased toward low complexity. The segment covering 553–567 (AAPPAGPQVPQPVLP) has biased composition (pro residues). Positions 662 to 675 (QLPPQQAQASGPQA) are enriched in low complexity. Basic and acidic residues predominate over residues 725 to 746 (SIDRRGSSKERRTSSKERRAPS). The segment covering 862–871 (PQATATTQEA) has biased composition (low complexity). Positions 881–891 (RSGKATRKKKH) are enriched in basic residues. In terms of domain architecture, MAGE spans 1020–1219 (LDERANALVQ…QSWPFHYLEA (200 aa)). The span at 1226 to 1235 (EDTDEDEPDT) shows a compositional bias: acidic residues. Residues 1226-1249 (EDTDEDEPDTGDSAHGPTSRPPPR) form a disordered region.

Part of a complex consisting of MAGEL2, TRIM27 and USP7; directly interacts with USP7. Interacts with TRIM27. Interacts with VPS35; leading to recruitment at retromer-containing endosomes. Interacts with BMAL1 and PER2. In terms of tissue distribution, expressed in placenta, fetal and adult brain. Not detected in heart and small intestine, very low levels in fibroblasts. Not expressed in brain of a Prader-Willi patient.

The protein resides in the early endosome. It localises to the cytoplasm. It is found in the nucleus. In terms of biological role, probably enhances ubiquitin ligase activity of RING-type zinc finger-containing E3 ubiquitin-protein ligases, possibly through recruitment and/or stabilization of the Ubl-conjugating enzyme (E2) at the E3:substrate complex. Acts as a regulator of retrograde transport via its interaction with VPS35. Recruited to retromer-containing endosomes and promotes the formation of 'Lys-63'-linked polyubiquitin chains at 'Lys-220' of WASHC1 together with TRIM27, leading to promote endosomal F-actin assembly. Regulates the circadian clock by repressing the transcriptional activator activity of the CLOCK-BMAL1 heterodimer. Significantly promotes the cytoplasmic accumulation of CLOCK. This chain is MAGE-like protein 2 (MAGEL2), found in Homo sapiens (Human).